The sequence spans 286 residues: Bifunctional protein FolD (286 aa).

Residues 166–168 (GQS), Ser191, and Ile232 each bind NADP(+).

This sequence belongs to the tetrahydrofolate dehydrogenase/cyclohydrolase family. In terms of assembly, homodimer.

It catalyses the reaction (6R)-5,10-methylene-5,6,7,8-tetrahydrofolate + NADP(+) = (6R)-5,10-methenyltetrahydrofolate + NADPH. It carries out the reaction (6R)-5,10-methenyltetrahydrofolate + H2O = (6R)-10-formyltetrahydrofolate + H(+). It participates in one-carbon metabolism; tetrahydrofolate interconversion. Functionally, catalyzes the oxidation of 5,10-methylenetetrahydrofolate to 5,10-methenyltetrahydrofolate and then the hydrolysis of 5,10-methenyltetrahydrofolate to 10-formyltetrahydrofolate. The protein is Bifunctional protein FolD of Alkalilimnicola ehrlichii (strain ATCC BAA-1101 / DSM 17681 / MLHE-1).